The primary structure comprises 344 residues: Phenylalanine--tRNA ligase alpha subunit (344 aa).

Glutamate 255 lines the Mg(2+) pocket.

It belongs to the class-II aminoacyl-tRNA synthetase family. Phe-tRNA synthetase alpha subunit type 1 subfamily. Tetramer of two alpha and two beta subunits. Mg(2+) is required as a cofactor.

It localises to the cytoplasm. The enzyme catalyses tRNA(Phe) + L-phenylalanine + ATP = L-phenylalanyl-tRNA(Phe) + AMP + diphosphate + H(+). The sequence is that of Phenylalanine--tRNA ligase alpha subunit from Sulfurihydrogenibium sp. (strain YO3AOP1).